A 312-amino-acid polypeptide reads, in one-letter code: Photosystem I assembly protein Ycf4 (312 aa).

Transmembrane regions (helical) follow at residues 42–62 (WAFI…SSYF), 91–111 (IILF…GLFL), and 113–133 (FYLW…IYIY).

The protein belongs to the Ycf4 family.

It localises to the plastid. Its subcellular location is the chloroplast thylakoid membrane. Functionally, seems to be required for the assembly of the photosystem I complex. This Pleurastrum terricola (Filamentous green alga) protein is Photosystem I assembly protein Ycf4.